Here is a 156-residue protein sequence, read N- to C-terminus: MLKLIWCQTLNGGISKNNKLPWYIKEELDHFYKTTKNHKIIMGKNTFDSLDQKPLNNRTNIIFSSIMQTPEDESYFVTNDFQQVLNDAKKEDIFIIGGKELFDIFLAYADVLIVSVLKDYYDCDLYMKVDYNNFNLDKQDVYDNFIVNYYSNKKEK.

One can recognise a DHFR domain in the interval 1–156 (MLKLIWCQTL…VNYYSNKKEK (156 aa)).

It belongs to the dihydrofolate reductase family.

The enzyme catalyses (6S)-5,6,7,8-tetrahydrofolate + NADP(+) = 7,8-dihydrofolate + NADPH + H(+). It functions in the pathway cofactor biosynthesis; tetrahydrofolate biosynthesis; 5,6,7,8-tetrahydrofolate from 7,8-dihydrofolate: step 1/1. Key enzyme in folate metabolism. Catalyzes an essential reaction for de novo glycine and purine synthesis, and for DNA precursor synthesis. The polypeptide is Dihydrofolate reductase (folA) (Ureaplasma parvum serovar 3 (strain ATCC 700970)).